The chain runs to 372 residues: Secreted beta-glucosidase SIM1 (372 aa).

An N-terminal signal peptide occupies residues 1-15; it reads MKYLTLLTVLSTALA. The segment at 51–85 is disordered; that stretch reads VTENASSGASSGETAETIQTRSSSDVSSSSDSNPV. Positions 52–85 are enriched in low complexity; it reads TENASSGASSGETAETIQTRSSSDVSSSSDSNPV. Asn54 and Asn351 each carry an N-linked (GlcNAc...) asparagine glycan.

It belongs to the SUN family.

It is found in the secreted. Its subcellular location is the cell wall. Functionally, cell surface beta-glucosidase involved in cell wall maintenance and cytokinesis. Plays a role redundant to SUN41. This is Secreted beta-glucosidase SIM1 (SIM1) from Candida albicans (strain SC5314 / ATCC MYA-2876) (Yeast).